The sequence spans 1057 residues: Probable E3 ubiquitin-protein ligase HERC4 (1057 aa).

7 RCC1 repeats span residues methionine 1–aspartate 51, aspartate 52–aspartate 101, lysine 102–lysine 154, serine 156–leucine 207, serine 208–lysine 259, glycine 261–proline 311, and serine 313–arginine 366. Positions lysine 730 to isoleucine 1057 constitute an HECT domain. Cysteine 1025 acts as the Glycyl thioester intermediate in catalysis.

The protein localises to the cytoplasm. The protein resides in the cytosol. The enzyme catalyses S-ubiquitinyl-[E2 ubiquitin-conjugating enzyme]-L-cysteine + [acceptor protein]-L-lysine = [E2 ubiquitin-conjugating enzyme]-L-cysteine + N(6)-ubiquitinyl-[acceptor protein]-L-lysine.. The protein operates within protein modification; protein ubiquitination. In terms of biological role, probable E3 ubiquitin-protein ligase involved in either protein trafficking or in the distribution of cellular structures. Required for spermatozoon maturation and fertility, and for the removal of the cytoplasmic droplet of the spermatozoon. E3 ubiquitin-protein ligases accept ubiquitin from an E2 ubiquitin-conjugating enzyme in the form of a thioester and then directly transfer it to targeted substrates. The protein is Probable E3 ubiquitin-protein ligase HERC4 (Herc4) of Rattus norvegicus (Rat).